The sequence spans 396 residues: Elongation factor Tu 2 (396 aa).

A tr-type G domain is found at Lys-10–Glu-206. The tract at residues Gly-19–Thr-26 is G1. Gly-19–Thr-26 is a binding site for GTP. Thr-26 contributes to the Mg(2+) binding site. The segment at Gly-60–Ala-64 is G2. Residues Asp-81–Gly-84 form a G3 region. GTP-binding positions include Asp-81 to His-85 and Asn-136 to Asp-139. The tract at residues Asn-136–Asp-139 is G4. The interval Ser-174–Leu-176 is G5.

The protein belongs to the TRAFAC class translation factor GTPase superfamily. Classic translation factor GTPase family. EF-Tu/EF-1A subfamily. In terms of assembly, monomer.

The protein localises to the cytoplasm. The enzyme catalyses GTP + H2O = GDP + phosphate + H(+). GTP hydrolase that promotes the GTP-dependent binding of aminoacyl-tRNA to the A-site of ribosomes during protein biosynthesis. This is Elongation factor Tu 2 from Halorhodospira halophila (strain DSM 244 / SL1) (Ectothiorhodospira halophila (strain DSM 244 / SL1)).